We begin with the raw amino-acid sequence, 233 residues long: Uracil-DNA glycosylase (233 aa).

The active-site Proton acceptor is the Asp70.

It belongs to the uracil-DNA glycosylase (UDG) superfamily. UNG family.

It localises to the cytoplasm. It carries out the reaction Hydrolyzes single-stranded DNA or mismatched double-stranded DNA and polynucleotides, releasing free uracil.. In terms of biological role, excises uracil residues from the DNA which can arise as a result of misincorporation of dUMP residues by DNA polymerase or due to deamination of cytosine. This Helicobacter pylori (strain HPAG1) protein is Uracil-DNA glycosylase.